We begin with the raw amino-acid sequence, 113 residues long: Ubiquinol-cytochrome-c reductase complex assembly factor 4 (113 aa).

A signal peptide spans 1–18 (MWGSLCKAPLLRLRPTFA). Over 19–72 (AVSNVKTIHIKASPDYNEGIDKSKPLKFSTSKASHRHWTVAKSLGSNQQRPWWK) the chain is Mitochondrial matrix. Residues 73 to 89 (VVPLSVFLTTVLLWAIF) traverse the membrane as a helical segment. Over 90 to 113 (RKETDIDEAIYKPIEQLQDESENK) the chain is Mitochondrial intermembrane.

Belongs to the UQCC4 family.

It is found in the mitochondrion inner membrane. Its function is as follows. Required for the assembly and stability of the mitochondrial ubiquinol-cytochrome c reductase complex (complex III (CIII) or cytochrome b-c1 complex), a multisubunit transmembrane complex that is part of the mitochondrial electron transport chain (ETC) which drives oxidative phosphorylation. This chain is Ubiquinol-cytochrome-c reductase complex assembly factor 4 (uqcc4), found in Xenopus tropicalis (Western clawed frog).